The chain runs to 332 residues: Anthranilate phosphoribosyltransferase (332 aa).

Residues G80, 83–84 (GD), T88, 90–93 (NLST), 108–116 (KHGNRSASG), and S120 each bind 5-phospho-alpha-D-ribose 1-diphosphate. Position 80 (G80) interacts with anthranilate. Residue S92 coordinates Mg(2+). N111 is an anthranilate binding site. R166 is a binding site for anthranilate. Mg(2+) is bound by residues D224 and E225.

The protein belongs to the anthranilate phosphoribosyltransferase family. In terms of assembly, homodimer. Mg(2+) serves as cofactor.

The catalysed reaction is N-(5-phospho-beta-D-ribosyl)anthranilate + diphosphate = 5-phospho-alpha-D-ribose 1-diphosphate + anthranilate. Its pathway is amino-acid biosynthesis; L-tryptophan biosynthesis; L-tryptophan from chorismate: step 2/5. Functionally, catalyzes the transfer of the phosphoribosyl group of 5-phosphorylribose-1-pyrophosphate (PRPP) to anthranilate to yield N-(5'-phosphoribosyl)-anthranilate (PRA). The polypeptide is Anthranilate phosphoribosyltransferase (Pyrobaculum calidifontis (strain DSM 21063 / JCM 11548 / VA1)).